We begin with the raw amino-acid sequence, 369 residues long: Anhydro-N-acetylmuramic acid kinase (369 aa).

12-19 is a binding site for ATP; it reads GTSLDGVD.

This sequence belongs to the anhydro-N-acetylmuramic acid kinase family.

It carries out the reaction 1,6-anhydro-N-acetyl-beta-muramate + ATP + H2O = N-acetyl-D-muramate 6-phosphate + ADP + H(+). It participates in amino-sugar metabolism; 1,6-anhydro-N-acetylmuramate degradation. Its pathway is cell wall biogenesis; peptidoglycan recycling. Functionally, catalyzes the specific phosphorylation of 1,6-anhydro-N-acetylmuramic acid (anhMurNAc) with the simultaneous cleavage of the 1,6-anhydro ring, generating MurNAc-6-P. Is required for the utilization of anhMurNAc either imported from the medium or derived from its own cell wall murein, and thus plays a role in cell wall recycling. The sequence is that of Anhydro-N-acetylmuramic acid kinase from Escherichia coli (strain SE11).